A 164-amino-acid polypeptide reads, in one-letter code: Outer membrane protein assembly factor BamE (164 aa).

A signal peptide spans M1–H19. A disordered region spans residues P111 to Q164. Polar residues-rich tracts occupy residues E117–N140 and K153–Q164.

The protein belongs to the BamE family. Part of the Bam complex.

It localises to the cell outer membrane. Functionally, part of the outer membrane protein assembly complex, which is involved in assembly and insertion of beta-barrel proteins into the outer membrane. The sequence is that of Outer membrane protein assembly factor BamE from Nitrosomonas europaea (strain ATCC 19718 / CIP 103999 / KCTC 2705 / NBRC 14298).